The following is a 201-amino-acid chain: Adenylyl-sulfate kinase (201 aa).

35 to 42 (GLSGSGKS) is a binding site for ATP. The active-site Phosphoserine intermediate is S109.

The protein belongs to the APS kinase family.

The catalysed reaction is adenosine 5'-phosphosulfate + ATP = 3'-phosphoadenylyl sulfate + ADP + H(+). The protein operates within sulfur metabolism; hydrogen sulfide biosynthesis; sulfite from sulfate: step 2/3. Catalyzes the synthesis of activated sulfate. The sequence is that of Adenylyl-sulfate kinase from Salmonella paratyphi A (strain AKU_12601).